We begin with the raw amino-acid sequence, 38 residues long: Spheniscin-1 (38 aa).

3 disulfides stabilise this stretch: Cys5–Cys33, Cys12–Cys27, and Cys17–Cys34.

In terms of assembly, monomer. In terms of tissue distribution, secreted into the stomach cavity.

It localises to the secreted. Its function is as follows. Has antifungal activity and antibacterial activity against Gram-positive and Gram-negative bacteria. Involved in the process of food preservation in the stomach during the incubation fast. May also be present during infection. This chain is Spheniscin-1, found in Aptenodytes patagonicus (King penguin).